A 1164-amino-acid chain; its full sequence is Shugoshin 2A (1164 aa).

A coiled-coil region spans residues 62 to 113; sequence LSKEKENSRRITTEKMQLQKEVEKLNFENTFLRLKLNTLNKKLVEIESHVSN. Disordered stretches follow at residues 160–269, 287–314, 390–492, 521–541, and 917–992; these read SEND…VTMR, HQPT…NTQR, RKVK…PFSR, TFVI…DKDT, and PLDS…ETHG. Residues 182 to 198 are compositionally biased toward low complexity; it reads SKTSPDSTSSVSRQPSS. Polar residues-rich tracts occupy residues 238–247 and 288–299; these read DQSPKSSLSE and QPTSSPGSNWNN. Positions 390–412 are enriched in basic and acidic residues; the sequence is RKVKGASSDKKRESSKRECKDGS. Residues 443-472 show a composition bias toward polar residues; sequence CISSTEQPSQVNTQKKRTLQNSSDQENIQN. Positions 525–541 are enriched in basic and acidic residues; the sequence is RKSEKDNLFPNQEDKDT. Residues 934–948 show a composition bias toward polar residues; sequence GEQTNLPKMQKQSAG. S1042 bears the Phosphoserine mark. The disordered stretch occupies residues 1092–1164; that stretch reads ITTGTRNPHH…EPSLRSKMRR (73 aa). A compositionally biased stretch (low complexity) spans 1112 to 1125; sequence TSLVLVDTSSVSDT. Residues 1126–1140 are compositionally biased toward polar residues; it reads NPANPENESEGQSSH.

The protein belongs to the shugoshin family. In terms of assembly, part of an astrin (SPAG5)-kinastrin (SKAP) complex containing KNSTRN, SPAG5, PLK1, DYNLL1 and SGO2A. Interacts with CDCA8. Interacts with PPP2CA. Ubiquitously expressed in proliferating cells. Highly expressed in the testis and oocytes.

It is found in the nucleus. Its subcellular location is the chromosome. The protein resides in the centromere. It localises to the kinetochore. Its function is as follows. Cooperates with PPP2CA to protect centromeric cohesin from separase-mediated cleavage in oocytes specifically during meiosis I. Has a crucial role in protecting REC8 at centromeres from cleavage by separase. During meiosis, protects centromeric cohesion complexes until metaphase II/anaphase II transition, preventing premature release of meiosis-specific REC8 cohesin complexes from anaphase I centromeres. Is thus essential for an accurate gametogenesis. May act by targeting PPP2CA to centromeres, thus leading to cohesin dephosphorylation. Essential for recruiting KIF2C to the inner centromere and for correcting defective kinetochore attachments. Involved in centromeric enrichment of AUKRB in prometaphase. The sequence is that of Shugoshin 2A from Mus musculus (Mouse).